Here is a 286-residue protein sequence, read N- to C-terminus: 2,3,4,5-tetrahydropyridine-2,6-dicarboxylate N-succinyltransferase (286 aa).

The substrate site is built by Arg-109 and Asp-146.

It belongs to the transferase hexapeptide repeat family. In terms of assembly, homotrimer.

It localises to the cytoplasm. The enzyme catalyses (S)-2,3,4,5-tetrahydrodipicolinate + succinyl-CoA + H2O = (S)-2-succinylamino-6-oxoheptanedioate + CoA. Its pathway is amino-acid biosynthesis; L-lysine biosynthesis via DAP pathway; LL-2,6-diaminopimelate from (S)-tetrahydrodipicolinate (succinylase route): step 1/3. This Bartonella tribocorum (strain CIP 105476 / IBS 506) protein is 2,3,4,5-tetrahydropyridine-2,6-dicarboxylate N-succinyltransferase.